Here is a 63-residue protein sequence, read N- to C-terminus: Putative F-box protein At1g47702 (63 aa).

The F-box domain maps to 23–63 (KDRISDLPNRILGKIIVKLPLDEAVRIMALSKRWKSIWDDN).

This is Putative F-box protein At1g47702 from Arabidopsis thaliana (Mouse-ear cress).